A 153-amino-acid polypeptide reads, in one-letter code: Ribosome maturation factor RimP (153 aa).

Belongs to the RimP family.

The protein resides in the cytoplasm. In terms of biological role, required for maturation of 30S ribosomal subunits. This chain is Ribosome maturation factor RimP, found in Coxiella burnetii (strain CbuG_Q212) (Coxiella burnetii (strain Q212)).